Consider the following 331-residue polypeptide: Undecaprenyl-phosphate 4-deoxy-4-formamido-L-arabinose transferase (331 aa).

The next 2 helical transmembrane spans lie at 236 to 256 (LSIV…FLIL) and 270 to 290 (VFPL…GLGL).

The protein belongs to the glycosyltransferase 2 family.

The protein resides in the cell inner membrane. It catalyses the reaction UDP-4-deoxy-4-formamido-beta-L-arabinose + di-trans,octa-cis-undecaprenyl phosphate = 4-deoxy-4-formamido-alpha-L-arabinopyranosyl di-trans,octa-cis-undecaprenyl phosphate + UDP. It functions in the pathway glycolipid biosynthesis; 4-amino-4-deoxy-alpha-L-arabinose undecaprenyl phosphate biosynthesis; 4-amino-4-deoxy-alpha-L-arabinose undecaprenyl phosphate from UDP-4-deoxy-4-formamido-beta-L-arabinose and undecaprenyl phosphate: step 1/2. Its pathway is bacterial outer membrane biogenesis; lipopolysaccharide biosynthesis. In terms of biological role, catalyzes the transfer of 4-deoxy-4-formamido-L-arabinose from UDP to undecaprenyl phosphate. The modified arabinose is attached to lipid A and is required for resistance to polymyxin and cationic antimicrobial peptides. This Shewanella sediminis (strain HAW-EB3) protein is Undecaprenyl-phosphate 4-deoxy-4-formamido-L-arabinose transferase.